A 122-amino-acid polypeptide reads, in one-letter code: MANQEQIIEAIKEMSVLELNDLVKAIEEEFGVTAAAPVAAAGAAGGGDAAAEKTEFDVELTSAGSSKIKVVKAVKEATGLGLKDAKELVDNAPKVIKEGVAKEEAEKLKEQLEEVGATVELK.

This sequence belongs to the bacterial ribosomal protein bL12 family. As to quaternary structure, homodimer. Part of the ribosomal stalk of the 50S ribosomal subunit. Forms a multimeric L10(L12)X complex, where L10 forms an elongated spine to which 2 to 4 L12 dimers bind in a sequential fashion. Binds GTP-bound translation factors.

Functionally, forms part of the ribosomal stalk which helps the ribosome interact with GTP-bound translation factors. Is thus essential for accurate translation. In Staphylococcus haemolyticus (strain JCSC1435), this protein is Large ribosomal subunit protein bL12.